A 147-amino-acid chain; its full sequence is MVKPIHVLSGPNLNLLGTREPEIYGKDTLDDVRARCKARAAVRGLSVVFRQSNHEGALIDWVQEARTEACALVINPAGYGHTSIALLDALKTLNIPVIECHLSNPAAREDFRRHTYVSLAATGIVSGFGAASYELAIEAAAGLVGAN.

Tyr-24 functions as the Proton acceptor in the catalytic mechanism. Substrate is bound by residues Asn-75, His-81, and Asp-88. His-101 (proton donor) is an active-site residue. Substrate-binding positions include 102-103 (LS) and Arg-112.

This sequence belongs to the type-II 3-dehydroquinase family. Homododecamer.

The catalysed reaction is 3-dehydroquinate = 3-dehydroshikimate + H2O. It participates in metabolic intermediate biosynthesis; chorismate biosynthesis; chorismate from D-erythrose 4-phosphate and phosphoenolpyruvate: step 3/7. Functionally, catalyzes a trans-dehydration via an enolate intermediate. This is 3-dehydroquinate dehydratase from Caulobacter sp. (strain K31).